The primary structure comprises 616 residues: Electron transfer flavoprotein-ubiquinone oxidoreductase, mitochondrial (616 aa).

Residues 1–32 (MLVRLTKLSCPAYQWFHALKIKKCLPLCAPRC) constitute a mitochondrion transit peptide. 70–84 (VVIVGAGPAGLSAAI) contacts FAD. Lys-95 carries the post-translational modification N6-acetyllysine. Residues 108-129 (IGAHTLSGACLDPAAFKELFPD) lie within the membrane without spanning it. Residues Lys-131 and Lys-222 each carry the N6-acetyllysine modification. The a ubiquinone site is built by Gly-304 and Gly-305. Lys-356 and Lys-415 each carry N6-acetyllysine. An intramembrane segment occupies 427 to 446 (AGLHVTEYEDNLKQSWVWKE). Ser-550 carries the post-translational modification Phosphoserine. [4Fe-4S] cluster is bound by residues Cys-560, Cys-585, Cys-588, and Cys-591. The 30-residue stretch at 576-605 (FRLQINAQNCVHCKTCDIKDPSQNINWVVP) folds into the 4Fe-4S ferredoxin-type domain.

The protein belongs to the ETF-QO/FixC family. In terms of assembly, monomer. The cofactor is [4Fe-4S] cluster. FAD serves as cofactor.

It localises to the mitochondrion inner membrane. The catalysed reaction is a ubiquinone + reduced [electron-transfer flavoprotein] = a ubiquinol + oxidized [electron-transfer flavoprotein] + H(+). Its function is as follows. Accepts electrons from ETF and reduces ubiquinone. The sequence is that of Electron transfer flavoprotein-ubiquinone oxidoreductase, mitochondrial (Etfdh) from Rattus norvegicus (Rat).